The sequence spans 567 residues: CTD small phosphatase-like protein 2 (567 aa).

Disordered regions lie at residues Gln-31 to Glu-53, Ala-100 to Val-150, and Asn-280 to Asn-361. Composition is skewed to low complexity over residues Ala-100–Lys-118, Ser-130–Val-150, and Glu-286–Ser-297. The segment covering Pro-298 to Pro-308 has biased composition (polar residues). The span at Thr-309–Ile-332 shows a compositional bias: low complexity. Residues Asn-337 to Phe-360 show a composition bias toward acidic residues. One can recognise an FCP1 homology domain in the interval His-386–Leu-544.

It belongs to the CTDSPL2 family.

Its function is as follows. Probable phosphatase. This chain is CTD small phosphatase-like protein 2 (ctdspl2), found in Dictyostelium discoideum (Social amoeba).